Reading from the N-terminus, the 367-residue chain is DNA replication and repair protein RecF (367 aa).

Residue 30-37 (GANGSGKT) participates in ATP binding.

The protein belongs to the RecF family.

The protein localises to the cytoplasm. In terms of biological role, the RecF protein is involved in DNA metabolism; it is required for DNA replication and normal SOS inducibility. RecF binds preferentially to single-stranded, linear DNA. It also seems to bind ATP. This is DNA replication and repair protein RecF from Pseudomonas savastanoi pv. phaseolicola (strain 1448A / Race 6) (Pseudomonas syringae pv. phaseolicola (strain 1448A / Race 6)).